The primary structure comprises 65 residues: UPF0434 protein IL1511 (65 aa).

It belongs to the UPF0434 family.

The sequence is that of UPF0434 protein IL1511 from Idiomarina loihiensis (strain ATCC BAA-735 / DSM 15497 / L2-TR).